The primary structure comprises 306 residues: UDP-3-O-acyl-N-acetylglucosamine deacetylase (306 aa).

Zn(2+) is bound by residues His79, His238, and Asp242. His265 serves as the catalytic Proton donor.

This sequence belongs to the LpxC family. The cofactor is Zn(2+).

It carries out the reaction a UDP-3-O-[(3R)-3-hydroxyacyl]-N-acetyl-alpha-D-glucosamine + H2O = a UDP-3-O-[(3R)-3-hydroxyacyl]-alpha-D-glucosamine + acetate. It participates in glycolipid biosynthesis; lipid IV(A) biosynthesis; lipid IV(A) from (3R)-3-hydroxytetradecanoyl-[acyl-carrier-protein] and UDP-N-acetyl-alpha-D-glucosamine: step 2/6. In terms of biological role, catalyzes the hydrolysis of UDP-3-O-myristoyl-N-acetylglucosamine to form UDP-3-O-myristoylglucosamine and acetate, the committed step in lipid A biosynthesis. This is UDP-3-O-acyl-N-acetylglucosamine deacetylase from Shewanella pealeana (strain ATCC 700345 / ANG-SQ1).